Here is a 228-residue protein sequence, read N- to C-terminus: 2-C-methyl-D-erythritol 4-phosphate cytidylyltransferase (228 aa).

The protein belongs to the IspD/TarI cytidylyltransferase family. IspD subfamily.

It carries out the reaction 2-C-methyl-D-erythritol 4-phosphate + CTP + H(+) = 4-CDP-2-C-methyl-D-erythritol + diphosphate. It functions in the pathway isoprenoid biosynthesis; isopentenyl diphosphate biosynthesis via DXP pathway; isopentenyl diphosphate from 1-deoxy-D-xylulose 5-phosphate: step 2/6. Catalyzes the formation of 4-diphosphocytidyl-2-C-methyl-D-erythritol from CTP and 2-C-methyl-D-erythritol 4-phosphate (MEP). This chain is 2-C-methyl-D-erythritol 4-phosphate cytidylyltransferase, found in Nostoc sp. (strain PCC 7120 / SAG 25.82 / UTEX 2576).